The sequence spans 288 residues: Phenazine biosynthesis-like domain-containing protein (288 aa).

E46 is an active-site residue.

The protein belongs to the PhzF family. In terms of assembly, interacts with UNRIP/MAWD.

This chain is Phenazine biosynthesis-like domain-containing protein (PBLD), found in Pongo abelii (Sumatran orangutan).